The following is a 349-amino-acid chain: MPRQLGELAAHVGGELLGDPSQLIHGLNGLEEAGPGDVSFYGNPRYRRQFEATRASAVLVGADVPPREGVALVRVANPHLAYAKLLRLFHAPERPAAGVRPGAWVHPEATVHPEAVLLPGASVDRGGRVGARTVLYPGAYVGEQAEVGEDCVLYPNVTVRERCIVGARVILHASSVVGADGFGFAFNPEGEAGPEHFKIPQVGIVRIEDDVEVGACTCIDRATVGETVVGRGAKLDNLVQIAHNVRVGPLSLICAQAGVSGSAEVGTGVVLAGQVGVVGHIRVGDLAKVGAQSGVAHDVPDGQVVSGSPAVPHREWLRASAAAGQMADLLKEVRALRRRVETLEKEKGP.

The active-site Proton acceptor is the H243.

This sequence belongs to the transferase hexapeptide repeat family. LpxD subfamily. In terms of assembly, homotrimer.

The enzyme catalyses a UDP-3-O-[(3R)-3-hydroxyacyl]-alpha-D-glucosamine + a (3R)-hydroxyacyl-[ACP] = a UDP-2-N,3-O-bis[(3R)-3-hydroxyacyl]-alpha-D-glucosamine + holo-[ACP] + H(+). The protein operates within bacterial outer membrane biogenesis; LPS lipid A biosynthesis. In terms of biological role, catalyzes the N-acylation of UDP-3-O-acylglucosamine using 3-hydroxyacyl-ACP as the acyl donor. Is involved in the biosynthesis of lipid A, a phosphorylated glycolipid that anchors the lipopolysaccharide to the outer membrane of the cell. This Myxococcus xanthus (strain DK1622) protein is UDP-3-O-acylglucosamine N-acyltransferase.